The primary structure comprises 635 residues: DNA-directed RNA polymerase subunit gamma (635 aa).

4 residues coordinate Zn(2+): Cys74, Cys76, Cys89, and Cys92. Mg(2+) is bound by residues Asp471, Asp473, and Asp475.

It belongs to the RNA polymerase beta' chain family. RpoC1 subfamily. In cyanobacteria the RNAP catalytic core is composed of 2 alpha, 1 beta, 1 beta', 1 gamma and 1 omega subunit. When a sigma factor is associated with the core the holoenzyme is formed, which can initiate transcription. Mg(2+) serves as cofactor. The cofactor is Zn(2+).

The enzyme catalyses RNA(n) + a ribonucleoside 5'-triphosphate = RNA(n+1) + diphosphate. Functionally, DNA-dependent RNA polymerase catalyzes the transcription of DNA into RNA using the four ribonucleoside triphosphates as substrates. The protein is DNA-directed RNA polymerase subunit gamma of Prochlorococcus marinus (strain NATL2A).